The chain runs to 314 residues: DNA-directed RNA polymerase subunit alpha (314 aa).

Residues 1-227 are alpha N-terminal domain (alpha-NTD); that stretch reads MTTFEIECIE…ELLFPLKEIN (227 aa). The alpha C-terminal domain (alpha-CTD) stretch occupies residues 237 to 314; that stretch reads IEDSKINQIL…LPKEKTSKSN (78 aa).

This sequence belongs to the RNA polymerase alpha chain family. As to quaternary structure, in plastids the minimal PEP RNA polymerase catalytic core is composed of four subunits: alpha, beta, beta', and beta''. When a (nuclear-encoded) sigma factor is associated with the core the holoenzyme is formed, which can initiate transcription.

It is found in the plastid. Its subcellular location is the chloroplast. The catalysed reaction is RNA(n) + a ribonucleoside 5'-triphosphate = RNA(n+1) + diphosphate. DNA-dependent RNA polymerase catalyzes the transcription of DNA into RNA using the four ribonucleoside triphosphates as substrates. In Pyrenomonas salina, this protein is DNA-directed RNA polymerase subunit alpha.